Here is a 255-residue protein sequence, read N- to C-terminus: Octanoyltransferase (255 aa).

The interval 1 to 21 is disordered; it reads MCATPVSPSPESPRSAQAGAA. The 187-residue stretch at 56–242 folds into the BPL/LPL catalytic domain; it reads FETSDEIWLV…SLIANIDGIP (187 aa). Substrate is bound by residues 96 to 103, 173 to 175, and 186 to 188; these read RGGQITYH, ALG, and GVS. Catalysis depends on C204, which acts as the Acyl-thioester intermediate.

Belongs to the LipB family.

Its subcellular location is the cytoplasm. The catalysed reaction is octanoyl-[ACP] + L-lysyl-[protein] = N(6)-octanoyl-L-lysyl-[protein] + holo-[ACP] + H(+). The protein operates within protein modification; protein lipoylation via endogenous pathway; protein N(6)-(lipoyl)lysine from octanoyl-[acyl-carrier-protein]: step 1/2. Catalyzes the transfer of endogenously produced octanoic acid from octanoyl-acyl-carrier-protein onto the lipoyl domains of lipoate-dependent enzymes. Lipoyl-ACP can also act as a substrate although octanoyl-ACP is likely to be the physiological substrate. The protein is Octanoyltransferase of Paraburkholderia phymatum (strain DSM 17167 / CIP 108236 / LMG 21445 / STM815) (Burkholderia phymatum).